Consider the following 451-residue polypeptide: Chromosomal replication initiator protein DnaA (451 aa).

The interval 1–71 (MSEQEIWKKV…QTIMKDVIGY (71 aa)) is domain I, interacts with DnaA modulators. Positions 71–112 (YEVEPKFFTAEQLAELDETSRKSNTPSEPQRQIIEYGHEGTD) are domain II. Residues 113-329 (QFNTHNTFDT…GALTRLLAYS (217 aa)) form a domain III, AAA+ region region. Positions 157, 159, 160, and 161 each coordinate ATP. The tract at residues 330 to 451 (KLQGRPITTE…EDLEKEIRNQ (122 aa)) is domain IV, binds dsDNA.

The protein belongs to the DnaA family. In terms of assembly, oligomerizes as a right-handed, spiral filament on DNA at oriC.

It localises to the cytoplasm. In terms of biological role, plays an essential role in the initiation and regulation of chromosomal replication. ATP-DnaA binds to the origin of replication (oriC) to initiate formation of the DNA replication initiation complex once per cell cycle. Binds the DnaA box (a 9 base pair repeat at the origin) and separates the double-stranded (ds)DNA. Forms a right-handed helical filament on oriC DNA; dsDNA binds to the exterior of the filament while single-stranded (ss)DNA is stabiized in the filament's interior. The ATP-DnaA-oriC complex binds and stabilizes one strand of the AT-rich DNA unwinding element (DUE), permitting loading of DNA polymerase. After initiation quickly degrades to an ADP-DnaA complex that is not apt for DNA replication. Binds acidic phospholipids. This is Chromosomal replication initiator protein DnaA from Staphylococcus haemolyticus (strain JCSC1435).